The sequence spans 319 residues: Cobalamin biosynthesis protein CobD (319 aa).

The next 4 helical transmembrane spans lie at 56–76 (GLWIVVVGLTWLVSWGCLWLM), 153–173 (VDGVIAPLFFLMIGGAPLAMA), 204–224 (LANWLPARLSWLLLSAAAWFI), and 290–310 (IPLSIYLMMIASQLALLLFAL).

Belongs to the CobD/CbiB family.

The protein localises to the cell membrane. It participates in cofactor biosynthesis; adenosylcobalamin biosynthesis. Converts cobyric acid to cobinamide by the addition of aminopropanol on the F carboxylic group. This is Cobalamin biosynthesis protein CobD from Photorhabdus laumondii subsp. laumondii (strain DSM 15139 / CIP 105565 / TT01) (Photorhabdus luminescens subsp. laumondii).